A 181-amino-acid polypeptide reads, in one-letter code: ADP-ribosylation factor 1-like 2 (181 aa).

A lipid anchor (N-myristoyl glycine) is attached at Gly-2. The segment at 3–16 (NVFGSLFKGLFGKR) is important for the stable binding to the membranes. Residues 24-32 (GLDAAGKTT), 126-129 (NKQD), and Ala-160 contribute to the GTP site.

Belongs to the small GTPase superfamily. Arf family. In terms of tissue distribution, expressed in hypodermis, intestine, spermatheca, uterus, gonadal sheath, vulva cells, pharynx muscle, body wall muscle, head neurons, ventral nerve cord.

The protein localises to the golgi apparatus membrane. The enzyme catalyses GTP + H2O = GDP + phosphate + H(+). Alternates between an inactive GDP-bound form and an active GTP-bound form. Activated by a guanine nucleotide-exchange factor (GEF) and inactivated by GTPase-activating protein (GAP). Functionally, small GTPase involved in protein trafficking between different compartments. Modulates vesicle budding and uncoating within the Golgi complex. In its GTP-bound form, triggers the recruitment of coatomer proteins to the Golgi membrane. The hydrolysis of ARF1-bound GTP, which is mediated by ARFGAPs proteins, is required for dissociation of coat proteins from Golgi membranes and vesicles. Involved in endoplasmic reticulum dynamics during embryogenesis. Also required for adult germline function. Plays a role in cell shedding during embryogenesis probably by promoting the endocytosis of cell adhesion molecules. During neurogenesis, involved in cell autonomous Q.p neuroblast asymmetric divisions that generate one precursor cell and one apoptotic cell, probably by controlling endocytosis. Plays a role in maintaining mitochondrial morphology. In Caenorhabditis elegans, this protein is ADP-ribosylation factor 1-like 2.